We begin with the raw amino-acid sequence, 292 residues long: Ribosomal RNA small subunit methyltransferase A (292 aa).

6 residues coordinate S-adenosyl-L-methionine: Asn-28, Leu-30, Gly-55, Glu-76, Asp-101, and Asn-126.

The protein belongs to the class I-like SAM-binding methyltransferase superfamily. rRNA adenine N(6)-methyltransferase family. RsmA subfamily.

Its subcellular location is the cytoplasm. The catalysed reaction is adenosine(1518)/adenosine(1519) in 16S rRNA + 4 S-adenosyl-L-methionine = N(6)-dimethyladenosine(1518)/N(6)-dimethyladenosine(1519) in 16S rRNA + 4 S-adenosyl-L-homocysteine + 4 H(+). Specifically dimethylates two adjacent adenosines (A1518 and A1519) in the loop of a conserved hairpin near the 3'-end of 16S rRNA in the 30S particle. May play a critical role in biogenesis of 30S subunits. The polypeptide is Ribosomal RNA small subunit methyltransferase A (Bacillus cereus (strain G9842)).